The primary structure comprises 83 residues: Delta-conotoxin-like Ac6.1 (83 aa).

An N-terminal signal peptide occupies residues 1–22; it reads MKLTCVVIVAVLFLTAWTFVMA. Residues 23–51 constitute a propeptide that is removed on maturation; the sequence is DDSRYGLKDLFPKARHEMKNPEASKLNKR. Disulfide bonds link Cys-54–Cys-69, Cys-61–Cys-73, and Cys-68–Cys-78. 2 positions are modified to 4-hydroxyproline: Pro-57 and Pro-65.

Belongs to the conotoxin O1 superfamily. In terms of tissue distribution, expressed by the venom duct.

The protein resides in the secreted. Its function is as follows. Delta-conotoxins bind to site 6 of voltage-gated sodium channels (Nav) and inhibit the inactivation process. This Conus achatinus (Little frog cone) protein is Delta-conotoxin-like Ac6.1.